A 413-amino-acid polypeptide reads, in one-letter code: Tyrosine--tRNA ligase (413 aa).

A 'HIGH' region motif is present at residues 59–68 (PTAPDIHLGH). Residues 243–247 (KMSKS) carry the 'KMSKS' region motif. Lys-246 contacts ATP. The 61-residue stretch at 351–411 (LAIGQLLKQA…GKRRFARVTL (61 aa)) folds into the S4 RNA-binding domain.

This sequence belongs to the class-I aminoacyl-tRNA synthetase family. TyrS type 2 subfamily. In terms of assembly, homodimer.

It is found in the cytoplasm. The enzyme catalyses tRNA(Tyr) + L-tyrosine + ATP = L-tyrosyl-tRNA(Tyr) + AMP + diphosphate + H(+). Its function is as follows. Catalyzes the attachment of tyrosine to tRNA(Tyr) in a two-step reaction: tyrosine is first activated by ATP to form Tyr-AMP and then transferred to the acceptor end of tRNA(Tyr). In Burkholderia pseudomallei (strain 1710b), this protein is Tyrosine--tRNA ligase.